Here is a 735-residue protein sequence, read N- to C-terminus: Catalase-peroxidase (735 aa).

2 stretches are compositionally biased toward polar residues: residues 1–10 and 17–26; these read MENQNRQNAA and SVTNQSSNRT. The interval 1-30 is disordered; sequence MENQNRQNAAQCPFHGSVTNQSSNRTTNKD. The segment at residues 100 to 223 is a cross-link (tryptophyl-tyrosyl-methioninium (Trp-Tyr) (with M-249)); it reads WHSAGTYRIG…LAAVQMGLIY (124 aa). His-101 serves as the catalytic Proton acceptor. The segment at residues 223–249 is a cross-link (tryptophyl-tyrosyl-methioninium (Tyr-Met) (with W-100)); the sequence is YVNPEGPDGKPDPKAAARDIRETFRRM. Heme b is bound at residue His-264.

This sequence belongs to the peroxidase family. Peroxidase/catalase subfamily. As to quaternary structure, homodimer or homotetramer. Requires heme b as cofactor. Post-translationally, formation of the three residue Trp-Tyr-Met cross-link is important for the catalase, but not the peroxidase activity of the enzyme.

The enzyme catalyses H2O2 + AH2 = A + 2 H2O. It carries out the reaction 2 H2O2 = O2 + 2 H2O. Bifunctional enzyme with both catalase and broad-spectrum peroxidase activity. Also displays NADH oxidase, INH lyase and isonicotinoyl-NAD synthase activities. This Geobacillus stearothermophilus (Bacillus stearothermophilus) protein is Catalase-peroxidase.